The primary structure comprises 132 residues: Small ribosomal subunit protein uS8 (132 aa).

It belongs to the universal ribosomal protein uS8 family. In terms of assembly, part of the 30S ribosomal subunit. Contacts proteins S5 and S12.

One of the primary rRNA binding proteins, it binds directly to 16S rRNA central domain where it helps coordinate assembly of the platform of the 30S subunit. This chain is Small ribosomal subunit protein uS8, found in Allorhizobium ampelinum (strain ATCC BAA-846 / DSM 112012 / S4) (Agrobacterium vitis (strain S4)).